We begin with the raw amino-acid sequence, 120 residues long: NAD(P)H-quinone oxidoreductase subunit 3 (120 aa).

The next 3 helical transmembrane spans lie at 10-30, 64-84, and 89-109; these read FLGF…TNLI, MFAL…PWAV, and LGLL…IALA.

The protein belongs to the complex I subunit 3 family. In terms of assembly, NDH-1 can be composed of about 15 different subunits; different subcomplexes with different compositions have been identified which probably have different functions.

The protein resides in the cellular thylakoid membrane. It catalyses the reaction a plastoquinone + NADH + (n+1) H(+)(in) = a plastoquinol + NAD(+) + n H(+)(out). It carries out the reaction a plastoquinone + NADPH + (n+1) H(+)(in) = a plastoquinol + NADP(+) + n H(+)(out). Its function is as follows. NDH-1 shuttles electrons from an unknown electron donor, via FMN and iron-sulfur (Fe-S) centers, to quinones in the respiratory and/or the photosynthetic chain. The immediate electron acceptor for the enzyme in this species is believed to be plastoquinone. Couples the redox reaction to proton translocation, and thus conserves the redox energy in a proton gradient. Cyanobacterial NDH-1 also plays a role in inorganic carbon-concentration. The protein is NAD(P)H-quinone oxidoreductase subunit 3 of Prochlorococcus marinus (strain AS9601).